A 94-amino-acid chain; its full sequence is Evasin P1104 (94 aa).

A signal peptide spans 1-28 (MASNLFTIFQLAGFVAIVFIVNLHSVSA). 3 disulfide bridges follow: cysteine 48–cysteine 66, cysteine 52–cysteine 68, and cysteine 62–cysteine 79. N-linked (GlcNAc...) asparagine glycosylation occurs at asparagine 51.

Its subcellular location is the secreted. Its function is as follows. Salivary chemokine-binding protein which binds to host chemokines CXCL1, CXCL2, CXCL3, CXCL5, CXCL6, CXCL12 and CXCL13. This is Evasin P1104 from Ixodes ricinus (Common tick).